We begin with the raw amino-acid sequence, 122 residues long: Large ribosomal subunit protein uL14c (122 aa).

The protein belongs to the universal ribosomal protein uL14 family. In terms of assembly, part of the 50S ribosomal subunit.

It is found in the plastid. It localises to the chloroplast. In terms of biological role, binds to 23S rRNA. This is Large ribosomal subunit protein uL14c from Chaetosphaeridium globosum (Charophycean green alga).